The following is a 577-amino-acid chain: Cytidine monophosphate-N-acetylneuraminic acid hydroxylase (577 aa).

A propeptide spanning residues 1-4 (MMDR) is cleaved from the precursor. The 99-residue stretch at 14-112 (LSPAEVANLK…IEMDENNGLS (99 aa)) folds into the Rieske domain. 4 residues coordinate [2Fe-2S] cluster: Cys54, His56, Cys75, and His78.

It belongs to the CMP-Neu5Ac hydroxylase family. [2Fe-2S] cluster is required as a cofactor. Expressed in all tissues tested, except in brain.

It is found in the cytoplasm. The protein resides in the endoplasmic reticulum. It carries out the reaction CMP-N-acetyl-beta-neuraminate + 2 Fe(II)-[cytochrome b5] + O2 + 2 H(+) = CMP-N-glycoloyl-beta-neuraminate + 2 Fe(III)-[cytochrome b5] + H2O. It functions in the pathway amino-sugar metabolism; N-acetylneuraminate metabolism. Functionally, sialic acids are components of carbohydrate chains of glycoconjugates and are involved in cell-cell recognition and cell-pathogen interactions. Catalyzes the conversion of CMP-N-acetylneuraminic acid (CMP-Neu5Ac) into its hydroxylated derivative CMP-N-glycolylneuraminic acid (CMP-Neu5Gc), a sialic acid abundantly expressed at the surface of many cells. In Mus musculus (Mouse), this protein is Cytidine monophosphate-N-acetylneuraminic acid hydroxylase (Cmah).